Here is a 223-residue protein sequence, read N- to C-terminus: Phosphoribosylformylglycinamidine synthase subunit PurQ (223 aa).

A Glutamine amidotransferase type-1 domain is found at 4-223 (FAVVVFPGTN…FRSMVEWARK (220 aa)). C85 serves as the catalytic Nucleophile. Active-site residues include H196 and E198.

Part of the FGAM synthase complex composed of 1 PurL, 1 PurQ and 2 PurS subunits.

Its subcellular location is the cytoplasm. It catalyses the reaction N(2)-formyl-N(1)-(5-phospho-beta-D-ribosyl)glycinamide + L-glutamine + ATP + H2O = 2-formamido-N(1)-(5-O-phospho-beta-D-ribosyl)acetamidine + L-glutamate + ADP + phosphate + H(+). It carries out the reaction L-glutamine + H2O = L-glutamate + NH4(+). Its pathway is purine metabolism; IMP biosynthesis via de novo pathway; 5-amino-1-(5-phospho-D-ribosyl)imidazole from N(2)-formyl-N(1)-(5-phospho-D-ribosyl)glycinamide: step 1/2. Part of the phosphoribosylformylglycinamidine synthase complex involved in the purines biosynthetic pathway. Catalyzes the ATP-dependent conversion of formylglycinamide ribonucleotide (FGAR) and glutamine to yield formylglycinamidine ribonucleotide (FGAM) and glutamate. The FGAM synthase complex is composed of three subunits. PurQ produces an ammonia molecule by converting glutamine to glutamate. PurL transfers the ammonia molecule to FGAR to form FGAM in an ATP-dependent manner. PurS interacts with PurQ and PurL and is thought to assist in the transfer of the ammonia molecule from PurQ to PurL. The sequence is that of Phosphoribosylformylglycinamidine synthase subunit PurQ from Thermococcus kodakarensis (strain ATCC BAA-918 / JCM 12380 / KOD1) (Pyrococcus kodakaraensis (strain KOD1)).